A 423-amino-acid polypeptide reads, in one-letter code: MEVIQVKKSLNLKGEVKIDGAKNSALPIIAASLLGTEPIILEDVPKLKDVSIILKVLEELGSKVTYLDKNKVEIDSSNVNNSVTPHELMNKMRASFLVMGPLLTRLGQTKTYLPGGCAIGSRPVDLHLKGFKALGAEIESTDEKIEAIAKDGLIGGEIYLDFPSVGATQNIMMAATMAKGETVIENAAKEPEIVDLASFLNKLGAKVRGAGTSTIRIVGVDKLHGARHTIIPDRIEAATFMVASAITRGDVTVKNCISSHIMPIIAKLREVGCEVIENEDEDSIRVIATGRLKGTKIKTLPYPGFPTDVQAQFMALMTVCKGQSSVEETVFENRFMHVEQLQKMGAAIATEGNEASIAGVDSLQGATVKSTDLRAGAALILAGLVADGTTNVTDIYHIDRGYDDIVSKFKKLGANIERIEIED.

22–23 serves as a coordination point for phosphoenolpyruvate; that stretch reads KN. R93 lines the UDP-N-acetyl-alpha-D-glucosamine pocket. The active-site Proton donor is C117. A 2-(S-cysteinyl)pyruvic acid O-phosphothioketal modification is found at C117. UDP-N-acetyl-alpha-D-glucosamine-binding positions include 122-126, D308, and V330; that span reads RPVDL.

This sequence belongs to the EPSP synthase family. MurA subfamily.

It localises to the cytoplasm. It carries out the reaction phosphoenolpyruvate + UDP-N-acetyl-alpha-D-glucosamine = UDP-N-acetyl-3-O-(1-carboxyvinyl)-alpha-D-glucosamine + phosphate. It functions in the pathway cell wall biogenesis; peptidoglycan biosynthesis. Functionally, cell wall formation. Adds enolpyruvyl to UDP-N-acetylglucosamine. The sequence is that of UDP-N-acetylglucosamine 1-carboxyvinyltransferase from Finegoldia magna (strain ATCC 29328 / DSM 20472 / WAL 2508) (Peptostreptococcus magnus).